A 144-amino-acid chain; its full sequence is Large ribosomal subunit protein uL11 (144 aa).

This sequence belongs to the universal ribosomal protein uL11 family. In terms of assembly, part of the ribosomal stalk of the 50S ribosomal subunit. Interacts with L10 and the large rRNA to form the base of the stalk. L10 forms an elongated spine to which L12 dimers bind in a sequential fashion forming a multimeric L10(L12)X complex. One or more lysine residues are methylated.

Its function is as follows. Forms part of the ribosomal stalk which helps the ribosome interact with GTP-bound translation factors. This Gluconobacter oxydans (strain 621H) (Gluconobacter suboxydans) protein is Large ribosomal subunit protein uL11.